Here is a 949-residue protein sequence, read N- to C-terminus: Pyruvate, phosphate dikinase, chloroplastic (949 aa).

The N-terminal 74 residues, 1–74 (MASAFKGILI…VMAPASDPTS (74 aa)), are a transit peptide targeting the chloroplast. Phosphothreonine; by PDRP1 is present on threonine 530. The Tele-phosphohistidine intermediate role is filled by histidine 532. Substrate-binding residues include arginine 638, arginine 695, glutamate 824, glycine 845, threonine 846, asparagine 847, and aspartate 848. Mg(2+) is bound at residue glutamate 824. Residue aspartate 848 participates in Mg(2+) binding. Cysteine 910 functions as the Proton donor in the catalytic mechanism.

It belongs to the PEP-utilizing enzyme family. Homodimer. Mg(2+) serves as cofactor. Phosphorylation of Thr-530 in the dark inactivates the enzyme. Dephosphorylation upon light stimulation reactivates the enzyme.

The protein localises to the plastid. It is found in the chloroplast. The catalysed reaction is pyruvate + phosphate + ATP = phosphoenolpyruvate + AMP + diphosphate + H(+). Activated by light-induced dephosphorylation. Inhibited by dark-induced phosphorylation. Both reactions are catalyzed by PDRP1. Its function is as follows. Formation of phosphoenolpyruvate, which is the primary acceptor of CO(2) in C4 and some Crassulacean acid metabolism plants. The chain is Pyruvate, phosphate dikinase, chloroplastic (PPD) from Mesembryanthemum crystallinum (Common ice plant).